Consider the following 295-residue polypeptide: MEVGSKSFATASKLFDAKTRRSVLMLYAWCRHCDDVIDDQVLGFSNDTPSLQSAEQRLAQLEMKTRQPMRIQMHEPAFAAFQEVAMAHDILPAYAFDHLAGFAMDVHETRYQTLDDTLRYCYHVAGVVGLMMAQIMGVRDNATLDRACDLGLAFQLTNIARDIVEDAEAGRCYLPAAWLAEEGLTRENLADPQNRKALSRVARRLVETAEPYYRSASAGLPGLPLRSAWAIATAQQVYRKIGMKVVQAGSQAWEQRQSTSTPEKLALLVAASGQAVTSRVARHAPRSADLWQRPV.

It belongs to the phytoene/squalene synthase family. The cofactor is ATP. It depends on Mn(2+) as a cofactor.

The enzyme catalyses 2 (2E,6E,10E)-geranylgeranyl diphosphate = 15-cis-phytoene + 2 diphosphate. The protein operates within carotenoid biosynthesis; phytoene biosynthesis. Significant inhibition is seen at GGPP concentrations above 100 uM. Involved in the biosynthesis of carotenoids. Catalyzes stereoselectively the condensation of two molecules of geranylgeranyl diphosphate (GGPP) to give prephytoene diphosphate (PPPP) and the subsequent rearrangement of the cyclopropylcarbinyl intermediate to yield 15-cis-phytoene. This Enterobacter agglomerans (Erwinia herbicola) protein is 15-cis-phytoene synthase (crtB).